The primary structure comprises 235 residues: MSAIVEDMYLLSSSMKMEKQFRKRHHSDSSDDDSSSPKSASPSMDDDRRAHHNELERRRRDHIKDHFTILKDAIPLLDGEKSSRALILKRAVEFIHVMQTKLSSQGKAIEDLTRKNELLEERLLERESSGSPSSSRLPALAVSSSQMQLTMPIIPQMQNIAQLSQYPQQANIIAQSTNPAQLDGLIALNNDAILALLGSFQSVSPSLLDSAPGTPPSGFYPCAFSPVDQQMAVKI.

The interval 18–49 (EKQFRKRHHSDSSDDDSSSPKSASPSMDDDRR) is disordered. The basic motif stretch occupies residues 47 to 60 (DRRAHHNELERRRR). The region spanning 47–98 (DRRAHHNELERRRRDHIKDHFTILKDAIPLLDGEKSSRALILKRAVEFIHVM) is the bHLH domain. Residues 61–98 (DHIKDHFTILKDAIPLLDGEKSSRALILKRAVEFIHVM) are helix-loop-helix motif.

Belongs to the MAX family. May form homodimer. Interacts (via N-terminus) with skn-1 isoforms a and c. As to expression, expressed in the intestine and in the AWC sensory neurons.

It is found in the nucleus. It localises to the cytoplasm. In terms of biological role, transcription factor which regulates the expression of genes involved in lipid metabolism in response to nutrient availability. Binds to the E-box motif 5'-CACGTG-3'. Under well-fed conditions, binds to the promoter and represses the expression of lipase genes lipl-1, lipl-2, lipl-3 and to a lesser extent lipl-5, thereby preventing lipolysis. In response to a high-glucose diet, promotes fatty acid synthesis, elongation and desaturation by up-regulating transcription factor sbp-1 expression. Under well-fed conditions, acts remotely in the intestine to up-regulate the expression of chemoreceptor srh-234 gene in the ADL sensory neuron, possibly by regulating the insulin signaling pathway. The polypeptide is Protein mxl-3 (Caenorhabditis elegans).